A 121-amino-acid polypeptide reads, in one-letter code: Small ribosomal subunit protein uS13 (121 aa).

The disordered stretch occupies residues 92–121 (KRGLPVRGQRTRTNARTRKGPRRAAASLKK).

This sequence belongs to the universal ribosomal protein uS13 family. As to quaternary structure, part of the 30S ribosomal subunit. Forms a loose heterodimer with protein S19. Forms two bridges to the 50S subunit in the 70S ribosome.

Located at the top of the head of the 30S subunit, it contacts several helices of the 16S rRNA. In the 70S ribosome it contacts the 23S rRNA (bridge B1a) and protein L5 of the 50S subunit (bridge B1b), connecting the 2 subunits; these bridges are implicated in subunit movement. Contacts the tRNAs in the A and P-sites. The sequence is that of Small ribosomal subunit protein uS13 from Bordetella bronchiseptica (strain ATCC BAA-588 / NCTC 13252 / RB50) (Alcaligenes bronchisepticus).